The following is a 466-amino-acid chain: Probable ribonuclease FAU-1 (466 aa).

The S1 motif domain occupies Gly90–Thr152.

Belongs to the FAU-1 family.

In terms of biological role, probable RNase involved in rRNA stability through maturation and/or degradation of precursor rRNAs. Binds to RNA in loop regions with AU-rich sequences. The sequence is that of Probable ribonuclease FAU-1 from Haloarcula marismortui (strain ATCC 43049 / DSM 3752 / JCM 8966 / VKM B-1809) (Halobacterium marismortui).